Consider the following 338-residue polypeptide: Ornithine carbamoyltransferase (338 aa).

Carbamoyl phosphate contacts are provided by residues 56–59 (STRT), R107, and 134–137 (HPTQ). L-ornithine is bound by residues N168, D232, and 236–237 (SM). Residues 274 to 275 (CL) and R320 contribute to the carbamoyl phosphate site.

The protein belongs to the aspartate/ornithine carbamoyltransferase superfamily. OTCase family.

It is found in the cytoplasm. It catalyses the reaction carbamoyl phosphate + L-ornithine = L-citrulline + phosphate + H(+). It functions in the pathway amino-acid biosynthesis; L-arginine biosynthesis; L-arginine from L-ornithine and carbamoyl phosphate: step 1/3. Reversibly catalyzes the transfer of the carbamoyl group from carbamoyl phosphate (CP) to the N(epsilon) atom of ornithine (ORN) to produce L-citrulline. The protein is Ornithine carbamoyltransferase (argI) of Buchnera aphidicola subsp. Acyrthosiphon pisum (strain APS) (Acyrthosiphon pisum symbiotic bacterium).